We begin with the raw amino-acid sequence, 130 residues long: Holo-[acyl-carrier-protein] synthase (130 aa).

Mg(2+) is bound by residues aspartate 8 and glutamate 62.

This sequence belongs to the P-Pant transferase superfamily. AcpS family. Mg(2+) serves as cofactor.

Its subcellular location is the cytoplasm. The catalysed reaction is apo-[ACP] + CoA = holo-[ACP] + adenosine 3',5'-bisphosphate + H(+). Transfers the 4'-phosphopantetheine moiety from coenzyme A to a Ser of acyl-carrier-protein. This is Holo-[acyl-carrier-protein] synthase from Herminiimonas arsenicoxydans.